Consider the following 367-residue polypeptide: 3-dehydroquinate synthase (367 aa).

Residues 69-74 (DGEAFK), 103-107 (GVIGD), 127-128 (TT), K140, and K149 each bind NAD(+). Positions 182, 245, and 262 each coordinate Zn(2+).

Belongs to the sugar phosphate cyclases superfamily. Dehydroquinate synthase family. NAD(+) serves as cofactor. Requires Co(2+) as cofactor. It depends on Zn(2+) as a cofactor.

The protein localises to the cytoplasm. It carries out the reaction 7-phospho-2-dehydro-3-deoxy-D-arabino-heptonate = 3-dehydroquinate + phosphate. It functions in the pathway metabolic intermediate biosynthesis; chorismate biosynthesis; chorismate from D-erythrose 4-phosphate and phosphoenolpyruvate: step 2/7. In terms of biological role, catalyzes the conversion of 3-deoxy-D-arabino-heptulosonate 7-phosphate (DAHP) to dehydroquinate (DHQ). This is 3-dehydroquinate synthase from Pseudomonas syringae pv. tomato (strain ATCC BAA-871 / DC3000).